The following is a 114-amino-acid chain: Progonadoliberin-2 (114 aa).

The first 24 residues, 1-24 (MASSRRGLLLLLMLLTAHPGPSEA), serve as a signal peptide directing secretion. Glycine 34 carries the post-translational modification Glycine amide. Positions 35 to 59 (GKRALSSAQDPQNALRPPAGSPAQA) are disordered.

It belongs to the GnRH family.

The protein resides in the secreted. In terms of biological role, stimulates the secretion of gonadotropins; it stimulates the secretion of both luteinizing and follicle-stimulating hormones. The polypeptide is Progonadoliberin-2 (GNRH2) (Macaca mulatta (Rhesus macaque)).